A 461-amino-acid chain; its full sequence is Cysteine--tRNA ligase (461 aa).

Zn(2+) is bound at residue Cys-28. The short motif at 30-40 (ITIYDLCHIGH) is the 'HIGH' region element. Zn(2+)-binding residues include Cys-209, His-234, and Glu-238. The short motif at 266–270 (KMSKS) is the 'KMSKS' region element. Residue Lys-269 coordinates ATP.

Belongs to the class-I aminoacyl-tRNA synthetase family. In terms of assembly, monomer. Zn(2+) is required as a cofactor.

It localises to the cytoplasm. The catalysed reaction is tRNA(Cys) + L-cysteine + ATP = L-cysteinyl-tRNA(Cys) + AMP + diphosphate. The sequence is that of Cysteine--tRNA ligase from Yersinia pestis bv. Antiqua (strain Antiqua).